Reading from the N-terminus, the 96-residue chain is UPF0235 protein YggU (96 aa).

The protein belongs to the UPF0235 family.

The protein is UPF0235 protein YggU of Salmonella arizonae (strain ATCC BAA-731 / CDC346-86 / RSK2980).